We begin with the raw amino-acid sequence, 1135 residues long: Protocadherin-18 (1135 aa).

Residues 1–27 form the signal peptide; that stretch reads MHQMNAKMHFRFVFALLIVSFNHDVLG. Cadherin domains are found at residues 28–137, 138–246, 247–354, 361–465, 466–576, and 582–688; these read KNLK…SPQF, SRSL…SPAF, EQQS…KPEI, PGKE…PPHF, QRSR…VPVV, and RNNT…STAM. Topologically, residues 28–699 are extracellular; it reads KNLKYRIYEE…SVSQASLDVS (672 aa). N-linked (GlcNAc...) asparagine glycosylation is present at Asn-103. N-linked (GlcNAc...) asparagine glycosylation is found at Asn-269, Asn-420, Asn-559, Asn-583, and Asn-641. Residues 700–720 traverse the membrane as a helical segment; it reads MIIIISLGAICAVLLVIMVLF. Over 721–1135 the chain is Cytoplasmic; that stretch reads ATRCNREKKD…NKLLQDVRQS (415 aa). 4 disordered regions span residues 769-800, 869-889, 942-1003, and 1023-1046; these read LPIR…NSHQ, SLKD…DLGR, DYRS…STSS, and YSEC…PAKT. Residues 791–800 show a composition bias toward polar residues; it reads GSRQSHNSHQ. Residues 869 to 878 show a composition bias toward basic and acidic residues; sequence SLKDSGRGDS. Residues 893–1135 form an interaction with DAB1 region; sequence IDRLLGEGFS…NKLLQDVRQS (243 aa). The segment covering 1028 to 1039 has biased composition (basic and acidic residues); it reads EVDRSNSLERRK.

In terms of assembly, interacts with DAB1. In terms of tissue distribution, expressed in all tissues, with highest expression in lung and ovary.

Its subcellular location is the cell membrane. Its function is as follows. Potential calcium-dependent cell-adhesion protein. The chain is Protocadherin-18 (PCDH18) from Homo sapiens (Human).